We begin with the raw amino-acid sequence, 498 residues long: Glycerol kinase (498 aa).

Residue threonine 12 participates in ADP binding. Residues threonine 12, threonine 13, and serine 14 each contribute to the ATP site. Residue threonine 12 participates in sn-glycerol 3-phosphate binding. Arginine 16 contacts ADP. Arginine 82, glutamate 83, tyrosine 134, and aspartate 244 together coordinate sn-glycerol 3-phosphate. Arginine 82, glutamate 83, tyrosine 134, aspartate 244, and glutamine 245 together coordinate glycerol. Positions 266 and 309 each coordinate ADP. Residues threonine 266, glycine 309, glutamine 313, and glycine 410 each coordinate ATP. ADP contacts are provided by glycine 410 and asparagine 414.

It belongs to the FGGY kinase family. In terms of assembly, homotetramer and homodimer (in equilibrium).

The catalysed reaction is glycerol + ATP = sn-glycerol 3-phosphate + ADP + H(+). It participates in polyol metabolism; glycerol degradation via glycerol kinase pathway; sn-glycerol 3-phosphate from glycerol: step 1/1. Activated by phosphorylation and inhibited by fructose 1,6-bisphosphate (FBP). Functionally, key enzyme in the regulation of glycerol uptake and metabolism. Catalyzes the phosphorylation of glycerol to yield sn-glycerol 3-phosphate. In Natranaerobius thermophilus (strain ATCC BAA-1301 / DSM 18059 / JW/NM-WN-LF), this protein is Glycerol kinase.